The following is a 362-amino-acid chain: Major capsid protein VP1 (362 aa).

Positions M1 to P21 are disordered. The Bipartite nuclear localization signal motif lies at K5–K19. A C-terminal arm region spans residues I302–Q362. T338 carries the phosphothreonine; by host modification.

Belongs to the polyomaviruses coat protein VP1 family. In terms of assembly, homomultimer; disulfide-linked. The virus capsid is composed of 72 icosahedral units, each one composed of five disulfide-linked copies of VP1. Interacts with agnoprotein. Interacts with minor capsid proteins VP2 and VP3. Interacts with host HSPA8; this interaction probably participates in virus assembly. Interacts with host SP1; this interaction enhances the efficiency of viral packaging.

The protein localises to the virion. It is found in the host nucleus. Its subcellular location is the host endoplasmic reticulum. Its function is as follows. Forms an icosahedral capsid with a T=7 symmetry and a 40 nm diameter. The capsid is composed of 72 pentamers linked to each other by disulfide bonds and associated with VP2 or VP3 proteins. Binds to N-glycolylneuraminic analog of the ganglioside GM1 on the cell surface to provide virion attachment to target cell. Once attached, the virion is internalized by caveolin-mediated endocytosis and traffics to the endoplasmic reticulum. Inside the endoplasmic reticulum, the protein folding machinery isomerizes VP1 interpentamer disulfide bonds, thereby triggering initial uncoating. Next, the virion uses the endoplasmic reticulum-associated degradation machinery to probably translocate in the cytosol before reaching the nucleus. Nuclear entry of the viral DNA involves the selective exposure and importin recognition of VP2/Vp3 nuclear localization signal. The assembly takes place in the cell nucleus. Encapsulates the genomic DNA and participates in rearranging nucleosomes around the viral DNA. The viral progenies exit the cells by lytic release. In Macaca (macaques), this protein is Major capsid protein VP1.